A 100-amino-acid chain; its full sequence is Urease subunit gamma (100 aa).

Belongs to the urease gamma subunit family. Heterotrimer of UreA (gamma), UreB (beta) and UreC (alpha) subunits. Three heterotrimers associate to form the active enzyme.

The protein localises to the cytoplasm. The enzyme catalyses urea + 2 H2O + H(+) = hydrogencarbonate + 2 NH4(+). Its pathway is nitrogen metabolism; urea degradation; CO(2) and NH(3) from urea (urease route): step 1/1. This Aliivibrio fischeri (strain ATCC 700601 / ES114) (Vibrio fischeri) protein is Urease subunit gamma.